The chain runs to 144 residues: L-fucose mutarotase (144 aa).

H22 functions as the Proton donor in the catalytic mechanism. Substrate is bound by residues D30, R109, and 131-133; that span reads YGN.

The protein belongs to the RbsD / FucU family. FucU mutarotase subfamily. As to quaternary structure, homodecamer.

It is found in the cytoplasm. The catalysed reaction is alpha-L-fucose = beta-L-fucose. It participates in carbohydrate metabolism; L-fucose metabolism. Involved in the anomeric conversion of L-fucose. The polypeptide is L-fucose mutarotase (Histophilus somni (strain 129Pt) (Haemophilus somnus)).